The primary structure comprises 874 residues: Leucine--tRNA ligase (874 aa).

The short motif at 47 to 57 (PYPSGKLHMGH) is the 'HIGH' region element. Residues 636–640 (KMSKS) carry the 'KMSKS' region motif. Lys639 contacts ATP.

This sequence belongs to the class-I aminoacyl-tRNA synthetase family.

The protein localises to the cytoplasm. It catalyses the reaction tRNA(Leu) + L-leucine + ATP = L-leucyl-tRNA(Leu) + AMP + diphosphate. The chain is Leucine--tRNA ligase from Acinetobacter baumannii (strain AB0057).